The primary structure comprises 145 residues: UPF0102 protein BAV3162 (145 aa).

This sequence belongs to the UPF0102 family.

The chain is UPF0102 protein BAV3162 from Bordetella avium (strain 197N).